A 432-amino-acid chain; its full sequence is Adenylosuccinate synthetase (432 aa).

GTP contacts are provided by residues 13–19 (GDEGKGK) and 41–43 (GHT). Asp14 functions as the Proton acceptor in the catalytic mechanism. Mg(2+) contacts are provided by Asp14 and Gly41. IMP is bound by residues 14–17 (DEGK), 39–42 (NAGH), Thr130, Arg144, Gln225, Thr240, and Arg304. His42 (proton donor) is an active-site residue. Substrate is bound at residue 300–306 (AVTGRPR). Residues Arg306, 332–334 (KLD), and 415–417 (STG) contribute to the GTP site.

Belongs to the adenylosuccinate synthetase family. As to quaternary structure, homodimer. Mg(2+) is required as a cofactor.

The protein localises to the cytoplasm. It carries out the reaction IMP + L-aspartate + GTP = N(6)-(1,2-dicarboxyethyl)-AMP + GDP + phosphate + 2 H(+). The protein operates within purine metabolism; AMP biosynthesis via de novo pathway; AMP from IMP: step 1/2. Plays an important role in the de novo pathway of purine nucleotide biosynthesis. Catalyzes the first committed step in the biosynthesis of AMP from IMP. The sequence is that of Adenylosuccinate synthetase from Haemophilus influenzae (strain PittGG).